A 152-amino-acid polypeptide reads, in one-letter code: D-aminoacyl-tRNA deacylase (152 aa).

A Gly-cisPro motif, important for rejection of L-amino acids motif is present at residues 142–143 (GP).

Belongs to the DTD family. As to quaternary structure, homodimer.

The protein localises to the cytoplasm. It carries out the reaction glycyl-tRNA(Ala) + H2O = tRNA(Ala) + glycine + H(+). It catalyses the reaction a D-aminoacyl-tRNA + H2O = a tRNA + a D-alpha-amino acid + H(+). Functionally, an aminoacyl-tRNA editing enzyme that deacylates mischarged D-aminoacyl-tRNAs. Also deacylates mischarged glycyl-tRNA(Ala), protecting cells against glycine mischarging by AlaRS. Acts via tRNA-based rather than protein-based catalysis; rejects L-amino acids rather than detecting D-amino acids in the active site. By recycling D-aminoacyl-tRNA to D-amino acids and free tRNA molecules, this enzyme counteracts the toxicity associated with the formation of D-aminoacyl-tRNA entities in vivo and helps enforce protein L-homochirality. This chain is D-aminoacyl-tRNA deacylase, found in Paraburkholderia xenovorans (strain LB400).